The following is a 448-amino-acid chain: Chaperone SurA (448 aa).

The signal sequence occupies residues 1–27 (MKKTLRFAAVASGLVASLITVAPSASA). 2 PpiC domains span residues 185–288 (QQDL…RLVE) and 301–399 (IVQT…QVLG).

The protein resides in the periplasm. The enzyme catalyses [protein]-peptidylproline (omega=180) = [protein]-peptidylproline (omega=0). Chaperone involved in the correct folding and assembly of outer membrane proteins. Recognizes specific patterns of aromatic residues and the orientation of their side chains, which are found more frequently in integral outer membrane proteins. May act in both early periplasmic and late outer membrane-associated steps of protein maturation. This is Chaperone SurA from Burkholderia mallei (strain ATCC 23344).